We begin with the raw amino-acid sequence, 271 residues long: Phosphate import ATP-binding protein PstB 3 (271 aa).

The region spanning Leu20–Val266 is the ABC transporter domain. Gly52–Ser59 provides a ligand contact to ATP.

The protein belongs to the ABC transporter superfamily. Phosphate importer (TC 3.A.1.7) family. The complex is composed of two ATP-binding proteins (PstB), two transmembrane proteins (PstC and PstA) and a solute-binding protein (PstS).

It localises to the cell inner membrane. The enzyme catalyses phosphate(out) + ATP + H2O = ADP + 2 phosphate(in) + H(+). Its function is as follows. Part of the ABC transporter complex PstSACB involved in phosphate import. Responsible for energy coupling to the transport system. This is Phosphate import ATP-binding protein PstB 3 from Synechocystis sp. (strain ATCC 27184 / PCC 6803 / Kazusa).